A 224-amino-acid polypeptide reads, in one-letter code: PKHD-type hydroxylase HNE_1625 (224 aa).

Residues 77–175 form the Fe2OG dioxygenase domain; it reads KFAPPLISCS…RFVFVGWIQS (99 aa). The Fe cation site is built by H95, D97, and H156. 2-oxoglutarate is bound at residue R166.

Requires Fe(2+) as cofactor. L-ascorbate serves as cofactor.

The protein is PKHD-type hydroxylase HNE_1625 of Hyphomonas neptunium (strain ATCC 15444).